Here is a 358-residue protein sequence, read N- to C-terminus: Heavy metal-associated isoprenylated plant protein 37 (358 aa).

Residues 12–75 (IQTFSLRVNI…KLVKAGKHAE (64 aa)) form the HMA domain. A metal cation contacts are provided by Cys-23 and Cys-26. Disordered regions lie at residues 100–194 (QKGQ…QNTQ) and 332–358 (QQQS…CNIM). Over residues 128–141 (AEEDGDGSEEEDGD) the composition is skewed to acidic residues. A compositionally biased stretch (low complexity) spans 148–181 (ANQQQQQNVVNAKKNSGGAAMNNGNNGVNAASKK). Composition is skewed to polar residues over residues 184-194 (QKQSNHNQNTQ) and 339-358 (HATN…CNIM). Position 355 is a cysteine methyl ester (Cys-355). A lipid anchor (S-farnesyl cysteine) is attached at Cys-355. Positions 356–358 (NIM) are cleaved as a propeptide — removed in mature form.

This sequence belongs to the HIPP family.

Heavy-metal-binding protein. The chain is Heavy metal-associated isoprenylated plant protein 37 from Arabidopsis thaliana (Mouse-ear cress).